Reading from the N-terminus, the 163-residue chain is Large ribosomal subunit protein uL10 (163 aa).

It belongs to the universal ribosomal protein uL10 family. Part of the ribosomal stalk of the 50S ribosomal subunit. The N-terminus interacts with L11 and the large rRNA to form the base of the stalk. The C-terminus forms an elongated spine to which L12 dimers bind in a sequential fashion forming a multimeric L10(L12)X complex.

Functionally, forms part of the ribosomal stalk, playing a central role in the interaction of the ribosome with GTP-bound translation factors. This chain is Large ribosomal subunit protein uL10, found in Actinobacillus succinogenes (strain ATCC 55618 / DSM 22257 / CCUG 43843 / 130Z).